Here is a 426-residue protein sequence, read N- to C-terminus: Melibiose/raffinose/stachyose-binding protein MelE (426 aa).

Residues Met1–Gly18 form the signal peptide. A lipid anchor (N-palmitoyl cysteine) is attached at Cys19. Cys19 carries S-diacylglycerol cysteine lipidation.

This sequence belongs to the bacterial solute-binding protein 1 family. The complex is composed of two ATP-binding proteins (MsmX), two transmembrane proteins (MelC and MelD) and a solute-binding protein (MelE).

It localises to the cell membrane. Functionally, part of the ABC transporter complex MelEDC-MsmX involved in melibiose, raffinose and stachyose import. Binds melibiose, raffinose and stachyose. The protein is Melibiose/raffinose/stachyose-binding protein MelE of Bacillus subtilis (strain 168).